A 133-amino-acid chain; its full sequence is Cytidine deaminase (133 aa).

The region spanning 4–126 is the CMP/dCMP-type deaminase domain; the sequence is VDWNMLRGNA…DLLPDAFGLD (123 aa). 45 to 47 contacts substrate; that stretch reads NVE. Position 56 (C56) interacts with Zn(2+). E58 acts as the Proton donor in catalysis. 2 residues coordinate Zn(2+): C89 and C92.

This sequence belongs to the cytidine and deoxycytidylate deaminase family. As to quaternary structure, homotetramer. Zn(2+) serves as cofactor.

It carries out the reaction cytidine + H2O + H(+) = uridine + NH4(+). The catalysed reaction is 2'-deoxycytidine + H2O + H(+) = 2'-deoxyuridine + NH4(+). In terms of biological role, recycles cytidine and 2-deoxycytidine for uridine and 2-deoxyuridine synthesis, respectively. Catalyzes the hydrolytic deamination of cytidine and 2-deoxycytidine to form, respectively, uridine and 2-deoxyuridine. The chain is Cytidine deaminase (cdd) from Mycobacterium tuberculosis (strain CDC 1551 / Oshkosh).